The chain runs to 206 residues: Small ribosomal subunit protein uS4 (206 aa).

The S4 RNA-binding domain occupies 94 to 157; that stretch reads RRLDNVVYRL…RRRTYFKNLI (64 aa).

Belongs to the universal ribosomal protein uS4 family. As to quaternary structure, part of the 30S ribosomal subunit. Contacts protein S5. The interaction surface between S4 and S5 is involved in control of translational fidelity.

Its function is as follows. One of the primary rRNA binding proteins, it binds directly to 16S rRNA where it nucleates assembly of the body of the 30S subunit. With S5 and S12 plays an important role in translational accuracy. The polypeptide is Small ribosomal subunit protein uS4 (Roseiflexus sp. (strain RS-1)).